Here is a 259-residue protein sequence, read N- to C-terminus: DNA-directed RNA polymerase subunit Rpo3 (259 aa).

This sequence belongs to the archaeal Rpo3/eukaryotic RPB3 RNA polymerase subunit family. Part of the RNA polymerase complex.

The protein resides in the cytoplasm. It catalyses the reaction RNA(n) + a ribonucleoside 5'-triphosphate = RNA(n+1) + diphosphate. Its function is as follows. DNA-dependent RNA polymerase (RNAP) catalyzes the transcription of DNA into RNA using the four ribonucleoside triphosphates as substrates. The protein is DNA-directed RNA polymerase subunit Rpo3 of Thermococcus kodakarensis (strain ATCC BAA-918 / JCM 12380 / KOD1) (Pyrococcus kodakaraensis (strain KOD1)).